A 72-amino-acid polypeptide reads, in one-letter code: NADH dehydrogenase [ubiquinone] 1 beta subcomplex subunit 3-A (72 aa).

Residues 31–48 form a helical membrane-spanning segment; that stretch reads ALPGIGIGVGAFCVYLVG.

Belongs to the complex I NDUFB3 subunit family. Complex I is composed of at least 49 different subunits.

Its subcellular location is the mitochondrion inner membrane. Functionally, accessory subunit of the mitochondrial membrane respiratory chain NADH dehydrogenase (Complex I), that is believed not to be involved in catalysis. Complex I functions in the transfer of electrons from NADH to the respiratory chain. The immediate electron acceptor for the enzyme is believed to be ubiquinone. The sequence is that of NADH dehydrogenase [ubiquinone] 1 beta subcomplex subunit 3-A from Arabidopsis thaliana (Mouse-ear cress).